The sequence spans 206 residues: Superoxide dismutase [Mn] (206 aa).

Residues His27, His82, Asp168, and His172 each contribute to the Mn(2+) site.

It belongs to the iron/manganese superoxide dismutase family. Homodimer. Mn(2+) is required as a cofactor.

It catalyses the reaction 2 superoxide + 2 H(+) = H2O2 + O2. Its function is as follows. Destroys superoxide anion radicals which are normally produced within the cells and which are toxic to biological systems. The protein is Superoxide dismutase [Mn] (sodA) of Salmonella typhi.